The chain runs to 444 residues: NAD-capped RNA hydrolase NUDT12 (444 aa).

ANK repeat units follow at residues 11–40 (EIISQFHYSAAEGDIAKLTAILSHSPSLLN) and 60–80 (SRQTALDIAKFWGYKHIANLL). An N6-succinyllysine modification is found at Lys-167. Zn(2+) is bound by residues Cys-266 and Cys-269. Lys-274 is subject to N6-succinyllysine. Zn(2+)-binding residues include Cys-284 and Cys-289. Residues Tyr-300, 336–338 (AGF), Glu-352, Glu-356, and Glu-397 contribute to the substrate site. A Nudix hydrolase domain is found at 301 to 435 (PRVDPVVIMQ…SRAIAHQLIK (135 aa)). Mg(2+) contacts are provided by Ala-336, Glu-352, Glu-356, and Glu-397. The short motif at 337 to 358 (GFIEPGETIEDAVRREVEEESG) is the Nudix box element. Residues 442–444 (PNL) carry the Microbody targeting signal motif.

This sequence belongs to the Nudix hydrolase family. NudC subfamily. As to quaternary structure, homodimer. Homodimerization is essential for its catalytic activity and protein stability. Interacts (via ANK repeats) with BLMH. The cofactor is Mg(2+). Requires Zn(2+) as cofactor.

The protein resides in the cytoplasm. The protein localises to the peroxisome. It localises to the cytoplasmic granule. It catalyses the reaction a 5'-end NAD(+)-phospho-ribonucleoside in mRNA + H2O = a 5'-end phospho-adenosine-phospho-ribonucleoside in mRNA + beta-nicotinamide D-ribonucleotide + 2 H(+). The enzyme catalyses NAD(+) + H2O = beta-nicotinamide D-ribonucleotide + AMP + 2 H(+). The catalysed reaction is NADH + H2O = reduced beta-nicotinamide D-ribonucleotide + AMP + 2 H(+). It carries out the reaction NADPH + H2O = reduced beta-nicotinamide D-ribonucleotide + adenosine 2',5'-bisphosphate + 2 H(+). MRNA decapping enzyme that specifically removes the nicotinamide adenine dinucleotide (NAD) cap from a subset of mRNAs by hydrolyzing the diphosphate linkage to produce nicotinamide mononucleotide (NMN) and 5' monophosphate mRNA. The NAD-cap is present at the 5'-end of some RNAs; in contrast to the canonical N7 methylguanosine (m7G) cap, the NAD cap promotes mRNA decay. Preferentially acts on NAD-capped transcripts in response to nutrient stress. Also acts on free nicotinamide adenine dinucleotide molecules: hydrolyzes NAD(H) into NMN(H) and AMP, and NADPH into NMNH and 2',5'-ADP. May act to regulate the concentration of peroxisomal nicotinamide nucleotide cofactors required for oxidative metabolism in this organelle. Regulates the levels of circadian clock components PER1, PER2, PER3 and CRY2 in the liver. The chain is NAD-capped RNA hydrolase NUDT12 from Bos taurus (Bovine).